A 77-amino-acid chain; its full sequence is ATP synthase subunit c (77 aa).

2 helical membrane-spanning segments follow: residues I13–A33 and F55–F75.

Belongs to the ATPase C chain family. F-type ATPases have 2 components, F(1) - the catalytic core - and F(0) - the membrane proton channel. F(1) has five subunits: alpha(3), beta(3), gamma(1), delta(1), epsilon(1). F(0) has three main subunits: a(1), b(2) and c(10-14). The alpha and beta chains form an alternating ring which encloses part of the gamma chain. F(1) is attached to F(0) by a central stalk formed by the gamma and epsilon chains, while a peripheral stalk is formed by the delta and b chains.

It is found in the cell membrane. Its function is as follows. F(1)F(0) ATP synthase produces ATP from ADP in the presence of a proton or sodium gradient. F-type ATPases consist of two structural domains, F(1) containing the extramembraneous catalytic core and F(0) containing the membrane proton channel, linked together by a central stalk and a peripheral stalk. During catalysis, ATP synthesis in the catalytic domain of F(1) is coupled via a rotary mechanism of the central stalk subunits to proton translocation. Functionally, key component of the F(0) channel; it plays a direct role in translocation across the membrane. A homomeric c-ring of between 10-14 subunits forms the central stalk rotor element with the F(1) delta and epsilon subunits. This is ATP synthase subunit c from Clavibacter sepedonicus (Clavibacter michiganensis subsp. sepedonicus).